A 1081-amino-acid chain; its full sequence is Importin-4 (1081 aa).

Met1 carries the post-translational modification N-acetylmethionine. The region spanning Ala24 to Arg90 is the Importin N-terminal domain. 6 HEAT repeats span residues Lys348 to Asp385, Arg390 to Pro427, Ser431 to Pro471, Pro475 to Ala513, Gln895 to His932, and Glu936 to Thr974.

It belongs to the importin beta family. In terms of assembly, found in a cytosolic complex with ASF1 (ASF1A or ASF1B) and histones H3 and H4.

The protein resides in the cytoplasm. The protein localises to the nucleus. Nuclear transport receptor that mediates nuclear import of proteins, such as histones, RPS3A, TNP2 and VDR. Serves as receptor for nuclear localization signals (NLS) in cargo substrates. Is thought to mediate docking of the importin/substrate complex to the nuclear pore complex (NPC) through binding to nucleoporin and the complex is subsequently translocated through the pore by an energy requiring, Ran-dependent mechanism. At the nucleoplasmic side of the NPC, Ran binds to the importin, the importin/substrate complex dissociates and importin is re-exported from the nucleus to the cytoplasm where GTP hydrolysis releases Ran. The directionality of nuclear import is thought to be conferred by an asymmetric distribution of the GTP- and GDP-bound forms of Ran between the cytoplasm and nucleus. Mediates the nuclear import of the histone H3-H4 dimer when in complex with ASF1 (ASF1A or ASF1B). Mediates the ligand-independent nuclear import of vitamin D receptor (VDR). In vitro, mediates the nuclear import of human cytomegalovirus UL84 by recognizing a non-classical NLS. The protein is Importin-4 (IPO4) of Homo sapiens (Human).